The primary structure comprises 379 residues: Anhydro-N-acetylmuramic acid kinase (379 aa).

9-16 serves as a coordination point for ATP; sequence GTSADGVD.

The protein belongs to the anhydro-N-acetylmuramic acid kinase family.

The enzyme catalyses 1,6-anhydro-N-acetyl-beta-muramate + ATP + H2O = N-acetyl-D-muramate 6-phosphate + ADP + H(+). It functions in the pathway amino-sugar metabolism; 1,6-anhydro-N-acetylmuramate degradation. It participates in cell wall biogenesis; peptidoglycan recycling. Catalyzes the specific phosphorylation of 1,6-anhydro-N-acetylmuramic acid (anhMurNAc) with the simultaneous cleavage of the 1,6-anhydro ring, generating MurNAc-6-P. Is required for the utilization of anhMurNAc either imported from the medium or derived from its own cell wall murein, and thus plays a role in cell wall recycling. The protein is Anhydro-N-acetylmuramic acid kinase of Synechococcus sp. (strain CC9605).